The chain runs to 143 residues: AP-4 complex subunit sigma (143 aa).

It belongs to the adaptor complexes small subunit family. Adaptor protein complex 4 (AP-4) is a heterotetramer composed of two large adaptins (epsilon-type subunit and beta-type subunit), a medium adaptin (mu-type subunit) and a small adaptin (sigma-type subunit). Interacts with EHD2.

It is found in the golgi apparatus. The protein resides in the trans-Golgi network. It localises to the membrane. Its subcellular location is the coated pit. Functionally, subunit of novel type of clathrin- or non-clathrin-associated protein coat involved in targeting proteins from the trans-Golgi network (TGN) to the endosomal-lysosomal system. In Arabidopsis thaliana (Mouse-ear cress), this protein is AP-4 complex subunit sigma.